The sequence spans 535 residues: Beta-glucosidase 47 (535 aa).

An N-terminal signal peptide occupies residues 1–38 (MKKSIVYEIMETKSSMYLSQFRLWLCFIITTLVSLSSS). Glutamine 73 serves as a coordination point for a beta-D-glucoside. The N-linked (GlcNAc...) asparagine glycan is linked to asparagine 93. A beta-D-glucoside is bound by residues histidine 175 and 220 to 221 (NE). Glutamate 221 acts as the Proton donor in catalysis. The cysteines at positions 240 and 247 are disulfide-linked. Asparagine 246 carries N-linked (GlcNAc...) asparagine glycosylation. Tyrosine 363 serves as a coordination point for a beta-D-glucoside. Residues cysteine 371 and cysteine 376 are joined by a disulfide bond. Asparagine 419 is a glycosylation site (N-linked (GlcNAc...) asparagine). An a beta-D-glucoside-binding site is contributed by glutamate 426. Glutamate 426 functions as the Nucleophile in the catalytic mechanism. Residue asparagine 432 is glycosylated (N-linked (GlcNAc...) asparagine). Residues tryptophan 470, 477 to 478 (EW), and phenylalanine 486 contribute to the a beta-D-glucoside site.

Belongs to the glycosyl hydrolase 1 family.

It carries out the reaction Hydrolysis of terminal, non-reducing beta-D-glucosyl residues with release of beta-D-glucose.. This chain is Beta-glucosidase 47, found in Arabidopsis thaliana (Mouse-ear cress).